Reading from the N-terminus, the 108-residue chain is MLLFCPGCGNGLIVEEGQRCHRFACNTCPYVHNITRKVTNRKYPKLKEVDDVLGGAAAWENVDSTAESCPKCEHPRAYFMQLQTRSADEPMTTFYKCCNAQCGHRWRD.

Zn(2+) is bound by residues Cys5, Cys8, Cys25, Cys28, Cys69, and Cys72. The segment at 5 to 28 (CPGCGNGLIVEEGQRCHRFACNTC) adopts a C4-type zinc-finger fold. Residues 65 to 107 (TAESCPKCEHPRAYFMQLQTRSADEPMTTFYKCCNAQCGHRWR) form a TFIIS-type zinc finger. The Hairpin motif lies at 88 to 89 (DE). The Zn(2+) site is built by Cys98 and Cys102.

The protein belongs to the archaeal RpoM/eukaryotic RPA12/RPB9/RPC11 RNA polymerase family. As to quaternary structure, component of the RNA polymerase III complex consisting of 17 subunits: a ten-subunit horseshoe-shaped catalytic core composed of POLR3A/RPC1, POLR3B/RPC2, POLR1C/RPAC1, POLR1D/RPAC2, POLR3K/RPC10, POLR2E/RPABC1, POLR2F/RPABC2, POLR2H/RPABC3, POLR2K/RPABC4 and POLR2L/RPABC5; a mobile stalk composed of two subunits POLR3H/RPC8 and CRCP/RPC9, protruding from the core and functioning primarily in transcription initiation; and additional subunits homologous to general transcription factors of the RNA polymerase II machinery, POLR3C/RPC3-POLR3F/RPC6-POLR3G/RPC7 heterotrimer required for transcription initiation and POLR3D/RPC4-POLR3E/RPC5 heterodimer involved in both transcription initiation and termination.

The protein localises to the nucleus. Its function is as follows. Core component of RNA polymerase III (Pol III) which synthesizes small non-coding RNAs using the four ribonucleoside triphosphates as substrates. Can mediate Pol I proofreading of the nascent RNA transcript. Anchors into the Pol III active site to constantly monitor transcription fidelity, cleaves mis-incorporated 5'-ribonucleotides and restarts the transcription process. Once Pol III reaches the poly(dT) termination signal, can induce Pol III clamp opening and transcription termination. Pol III plays an important role in sensing and limiting infection by intracellular bacteria and DNA viruses. Acts as a nuclear and cytosolic DNA sensor involved in innate immune response. Can sense non-self dsDNA that serves as template for transcription into dsRNA. The non-self RNA polymerase III transcripts, such as Epstein-Barr virus-encoded RNAs (EBERs) induce type I interferon and NF-kappa-B through the RIG-I pathway. The chain is DNA-directed RNA polymerase III subunit RPC10 from Homo sapiens (Human).